Reading from the N-terminus, the 78-residue chain is Small ribosomal subunit protein bS18 (78 aa).

The protein belongs to the bacterial ribosomal protein bS18 family. In terms of assembly, part of the 30S ribosomal subunit. Forms a tight heterodimer with protein bS6.

In terms of biological role, binds as a heterodimer with protein bS6 to the central domain of the 16S rRNA, where it helps stabilize the platform of the 30S subunit. This chain is Small ribosomal subunit protein bS18, found in Pseudothermotoga lettingae (strain ATCC BAA-301 / DSM 14385 / NBRC 107922 / TMO) (Thermotoga lettingae).